Consider the following 191-residue polypeptide: MSSESKSSQSEKELSGLVLEQKIKGSRKVSNYLVASMLSIGGVGFLLASFSSYFGRDFLPLGNPSTLIFVPQGLVMGLYGLAAFLLAIYFWRLINIDYGSGVNRFDKNKGVLSLSRRGLFKNIEIEIPIDEIKAVKLEVREGFNPLRRVSLRIKGRKDLPISRVGSPKPLLDLENEGAEIARFLEVNLEGI.

The next 2 helical transmembrane spans lie at 34–54 (VASM…SSYF) and 68–88 (IFVP…LLAI).

Belongs to the Ycf4 family.

The protein resides in the cellular thylakoid membrane. Seems to be required for the assembly of the photosystem I complex. This is Photosystem I assembly protein Ycf4 from Prochlorococcus marinus (strain NATL1A).